The following is a 230-amino-acid chain: Uracil-DNA glycosylase (230 aa).

Catalysis depends on Asp65, which acts as the Proton acceptor.

It belongs to the uracil-DNA glycosylase (UDG) superfamily. UNG family.

It is found in the cytoplasm. It carries out the reaction Hydrolyzes single-stranded DNA or mismatched double-stranded DNA and polynucleotides, releasing free uracil.. Functionally, excises uracil residues from the DNA which can arise as a result of misincorporation of dUMP residues by DNA polymerase or due to deamination of cytosine. The sequence is that of Uracil-DNA glycosylase from Pediococcus pentosaceus (strain ATCC 25745 / CCUG 21536 / LMG 10740 / 183-1w).